A 190-amino-acid chain; its full sequence is Ferric nitrobindin-like protein (190 aa).

The short motif at 20–26 (GNWAGAG) is the GXWXGXG element.

Belongs to the nitrobindin family.

This chain is Ferric nitrobindin-like protein, found in Streptomyces griseus subsp. griseus (strain JCM 4626 / CBS 651.72 / NBRC 13350 / KCC S-0626 / ISP 5235).